Reading from the N-terminus, the 1310-residue chain is Zinc finger protein 521 (1310 aa).

Residues 1 to 10 (MSRRKQAKPR) are compositionally biased toward basic residues. The disordered stretch occupies residues 1-46 (MSRRKQAKPRSLKDPNCKLEDTSEDGESPDCKKRQEEGDELEEEEA). Residues 11–21 (SLKDPNCKLED) are compositionally biased toward basic and acidic residues. A C2H2-type 1; degenerate zinc finger spans residues 48–68 (HSCDSCLQVFESLSDITEHKI). Residues 82–106 (DPTCSWPASSPSSKDQASPIHGEGF) are disordered. Polar residues predominate over residues 87 to 97 (WPASSPSSKDQ). 7 consecutive C2H2-type zinc fingers follow at residues 119-141 (YPCQFCDKSFSRLSYLKHHEQSH), 147-169 (FKCTYCSRLFKHKRSRDRHIKLH), 175-197 (YHCSECDASFSRSDHLKIHLKTH), 203-225 (YKCAICRRGFLSSSSLHGHMQVH), 247-270 (QKCSQCEEGFDFPEDLQKHIAECH), 282-305 (LQCMYCHELFMEETSLLNHMEQIH), and 311-333 (NSCNICSENFHSVEELYSHMDSH). Residues 404-428 (YSCIYCSKQLFSSLAVLQIHLKTMH) form a C2H2-type 9; degenerate zinc finger. 3 consecutive C2H2-type zinc fingers follow at residues 436–459 (HICQYCLEVLPSLFNLNEHLKQVH), 476–499 (YQCNFCSEIFNDLNMLQDHIRSSH), and 512–535 (FFCPHCYMGFLTDTSLEEHIRQVH). The C2H2-type 13; atypical zinc finger occupies 559-584 (YSCSYCTNSPIFNSVLKLNKHIKENH). 7 consecutive C2H2-type zinc fingers follow at residues 633–655 (YICNQCGAKYTSLDGFQTHLKTH), 663–685 (LTCPQCNKEFPNQESLLKHVTIH), 693–716 (YICESCDKQFTSVDDLQKHLLDMH), 721–744 (FRCTLCQEVFDSKVSIQLHLAVKH), 751–774 (YRCTSCNWDFRTETDLQLHVKHNH), 782–804 (HKCIFCGESFGTEVELQCHITTH), and 808–831 (YNCKFCSKAFHAIILLEKHLREKH). The segment at 885–907 (YGCDICGAAYTMESLLQNHQLRD) adopts a C2H2-type 21; degenerate zinc-finger fold. C2H2-type zinc fingers lie at residues 929-951 (YKCNVCSRTFFSEGGLREHMQTH), 958-980 (YMCPICGERFPSLLTLTEHKVTH), and 1019-1041 (FRCVVCMQTVTSTLELKIHGTFH). A C2H2-type 25; degenerate zinc finger spans residues 1064-1082 (YKCASCLKEFRSKQDLVKL). C2H2-type zinc fingers lie at residues 1138–1161 (TRCSSCNVKFESETELQNHIQTIH), 1194–1216 (YQCIKCQMVFYNEWDIQVHVANH), 1224–1246 (HECKLCSQTFDSPAKLQCHLIEH), 1255–1278 (FKCPVCFTVFVQANKLQQHIFSAH), and 1285–1308 (YDCAQCPQKFFFQTELQNHTMSQH).

The protein belongs to the krueppel C2H2-type zinc-finger protein family.

The protein localises to the nucleus. Its function is as follows. Transcription factor that can both act as an activator or a repressor depending on the context. Involved in BMP signaling and in the regulation of the immature compartment of the hematopoietic system. The chain is Zinc finger protein 521 (znf521) from Xenopus laevis (African clawed frog).